A 361-amino-acid polypeptide reads, in one-letter code: MKTILAAYSGVKKGSGSSILSALHDLPTVPWLTRSKMVKHLQVISVLQFIMTFLTMGIACSLLLMYMFCTDFWVISVLYVAWLIYDWNTPGQGGRRSTWVRDWTVWKYMRDYFPIRLIKTHNLLPSRNYIFGYHPHGILCFGAFCNFGTEATGFTKVFPGIKPSLATLAGNFRLPMFREYLMCGGICPVNRNSIDYLLSSNGTGNAVVIVIGGAAESLDCAPGRNSVMLKKRKGFVKLALKQGADLVPVYSFGENEVYKQLIFEEGSWWRTIQRKLQKFLGFAPCLFHGCGLFFPESWGLVPYCKPITTVVGEPITVPKIEEPTQDVIDMYHAMYIRSLKSLFDNYKTRFGLNESDTLIIH.

Over Met1–Gln42 the chain is Cytoplasmic. A helical transmembrane segment spans residues Val43–Ser61. The Lumenal portion of the chain corresponds to Leu62 to Met65. The chain crosses the membrane as a helical span at residues Tyr66–Tyr85. Residues Asp86–His361 lie on the Cytoplasmic side of the membrane.

Belongs to the diacylglycerol acyltransferase family.

It is found in the endoplasmic reticulum membrane. The protein localises to the lipid droplet. The protein resides in the cytoplasm. Its subcellular location is the perinuclear region. The enzyme catalyses an acyl-CoA + a 1,2-diacyl-sn-glycerol = a triacyl-sn-glycerol + CoA. It carries out the reaction all-trans-retinol + an acyl-CoA = an all-trans-retinyl ester + CoA. The catalysed reaction is 2-(9Z-octadecenoyl)-glycerol + (9Z)-octadecenoyl-CoA = 1,2-di-(9Z-octadecenoyl)-sn-glycerol + CoA. It catalyses the reaction 1,2-di-(9Z-octadecenoyl)-sn-glycerol + (9Z)-octadecenoyl-CoA = 1,2,3-tri-(9Z-octadecenoyl)-glycerol + CoA. The enzyme catalyses all-trans-retinol + hexadecanoyl-CoA = all-trans-retinyl hexadecanoate + CoA. It carries out the reaction 1-O-(9Z-octadecenyl)-glycerol + (9Z)-octadecenoyl-CoA = 1-O-(9Z-octadecyl)-3-(9Z-octadecenoyl)-glycerol + CoA. The catalysed reaction is 1-(9Z-octadecenoyl)-glycerol + (9Z)-octadecenoyl-CoA = 1,2-di-(9Z-octadecenoyl)-glycerol + CoA. It catalyses the reaction 1,2-di-(9Z-octadecenoyl)-sn-glycerol + hexadecanoyl-CoA = 1,2-di-(9Z)-octadecenoyl-3-hexadecanoyl-sn-glycerol + CoA. The enzyme catalyses 1,3-di-(9Z-octadecenoyl)-glycerol + (9Z)-octadecenoyl-CoA = 1,2,3-tri-(9Z-octadecenoyl)-glycerol + CoA. It carries out the reaction 2,3-di-(9Z)-octadecenoyl-sn-glycerol + (9Z)-octadecenoyl-CoA = 1,2,3-tri-(9Z-octadecenoyl)-glycerol + CoA. The catalysed reaction is 2-(9Z-octadecenoyl)-glycerol + hexadecanoyl-CoA = 1-hexadecanoyl-2-(9Z-octadecenoyl)-sn-glycerol + CoA. It functions in the pathway glycerolipid metabolism; triacylglycerol biosynthesis. Functionally, essential acyltransferase that catalyzes the terminal and only committed step in triacylglycerol synthesis by using diacylglycerol and fatty acyl CoA as substrates. Required for synthesis and storage of intracellular triglycerides. Probably plays a central role in cytosolic lipid accumulation. This Danio rerio (Zebrafish) protein is Diacylglycerol O-acyltransferase 2 (dgat2).